Reading from the N-terminus, the 334-residue chain is Aspartate carbamoyltransferase catalytic subunit (334 aa).

Carbamoyl phosphate-binding residues include Arg-71 and Thr-72. Position 99 (Lys-99) interacts with L-aspartate. Positions 121, 151, and 154 each coordinate carbamoyl phosphate. L-aspartate is bound by residues Arg-184 and Arg-239. Gly-280 and Pro-281 together coordinate carbamoyl phosphate.

Belongs to the aspartate/ornithine carbamoyltransferase superfamily. ATCase family. As to quaternary structure, heterododecamer (2C3:3R2) of six catalytic PyrB chains organized as two trimers (C3), and six regulatory PyrI chains organized as three dimers (R2).

It carries out the reaction carbamoyl phosphate + L-aspartate = N-carbamoyl-L-aspartate + phosphate + H(+). The protein operates within pyrimidine metabolism; UMP biosynthesis via de novo pathway; (S)-dihydroorotate from bicarbonate: step 2/3. In terms of biological role, catalyzes the condensation of carbamoyl phosphate and aspartate to form carbamoyl aspartate and inorganic phosphate, the committed step in the de novo pyrimidine nucleotide biosynthesis pathway. This chain is Aspartate carbamoyltransferase catalytic subunit, found in Pseudomonas fluorescens (strain ATCC BAA-477 / NRRL B-23932 / Pf-5).